Consider the following 445-residue polypeptide: Phosphoglucosamine mutase 1 (445 aa).

The active-site Phosphoserine intermediate is Ser-102. Mg(2+) contacts are provided by Ser-102, Asp-241, Asp-243, and Asp-245. Ser-102 carries the post-translational modification Phosphoserine.

The protein belongs to the phosphohexose mutase family. Requires Mg(2+) as cofactor. In terms of processing, activated by phosphorylation.

The catalysed reaction is alpha-D-glucosamine 1-phosphate = D-glucosamine 6-phosphate. Catalyzes the conversion of glucosamine-6-phosphate to glucosamine-1-phosphate. The polypeptide is Phosphoglucosamine mutase 1 (Shewanella frigidimarina (strain NCIMB 400)).